The following is a 224-amino-acid chain: Ribose-5-phosphate isomerase A (224 aa).

Substrate-binding positions include 34-37 (TGST), 87-90 (DGAD), and 100-103 (KGGG). Residue E109 is the Proton acceptor of the active site. K127 lines the substrate pocket.

Belongs to the ribose 5-phosphate isomerase family. Homodimer.

The catalysed reaction is aldehydo-D-ribose 5-phosphate = D-ribulose 5-phosphate. It functions in the pathway carbohydrate degradation; pentose phosphate pathway; D-ribose 5-phosphate from D-ribulose 5-phosphate (non-oxidative stage): step 1/1. Functionally, catalyzes the reversible conversion of ribose-5-phosphate to ribulose 5-phosphate. The chain is Ribose-5-phosphate isomerase A from Francisella tularensis subsp. tularensis (strain FSC 198).